Here is a 237-residue protein sequence, read N- to C-terminus: ATP-dependent dethiobiotin synthetase BioD (237 aa).

ATP is bound at residue 21 to 26; the sequence is GVGKTV. T25 serves as a coordination point for Mg(2+). K48 is a catalytic residue. T52 serves as a coordination point for substrate. Residues D56, 117–120, 177–178, and 209–211 each bind ATP; these read EALG, SC, and PYL. Residues D56 and E117 each contribute to the Mg(2+) site.

Belongs to the dethiobiotin synthetase family. Homodimer. Requires Mg(2+) as cofactor.

It localises to the cytoplasm. It catalyses the reaction (7R,8S)-7,8-diammoniononanoate + CO2 + ATP = (4R,5S)-dethiobiotin + ADP + phosphate + 3 H(+). The catalysed reaction is (7R,8S)-8-amino-7-(carboxyamino)nonanoate + ATP = (4R,5S)-dethiobiotin + ADP + phosphate + H(+). Its pathway is cofactor biosynthesis; biotin biosynthesis; biotin from 7,8-diaminononanoate: step 1/2. Catalyzes a mechanistically unusual reaction, the ATP-dependent insertion of CO2 between the N7 and N8 nitrogen atoms of 7,8-diaminopelargonic acid (DAPA, also called 7,8-diammoniononanoate) to form a ureido ring. This cyanobacterium does not encode bioA (which catalyzes the formation of the precursor for this reaction in the cannonical pathway), instead it encodes bioU, which replaces bioA and also performs the first half of the cannonical BioD reaction. Thus in this bacteria BioD has a different substrate. In Synechocystis replacement of bioU by bioA from E.coli leads to biotin synthesis, showing BioD can use the 'cannonical' 7,8-diammoniononanoate as a substrate. In Synechocystis sp. (strain ATCC 27184 / PCC 6803 / Kazusa), this protein is ATP-dependent dethiobiotin synthetase BioD.